Reading from the N-terminus, the 67-residue chain is Small ribosomal subunit protein eS27 (67 aa).

The Zn(2+) site is built by Cys-22, Cys-25, Cys-41, and Cys-44. The segment at 22-44 (CPDCGNEQVTFSHAAMVVRCLVC) adopts a C4-type zinc-finger fold.

The protein belongs to the eukaryotic ribosomal protein eS27 family. Part of the 30S ribosomal subunit. Requires Zn(2+) as cofactor.

The chain is Small ribosomal subunit protein eS27 from Pyrobaculum calidifontis (strain DSM 21063 / JCM 11548 / VA1).